The following is a 698-amino-acid chain: Pentatricopeptide repeat-containing protein 1, mitochondrial (698 aa).

The interval serine 49–glycine 88 is disordered. A compositionally biased stretch (polar residues) spans asparagine 62–threonine 78. PPR repeat units lie at residues threonine 133–proline 169, methionine 170–proline 204, serine 205–leucine 243, asparagine 244–valine 278, threonine 279–proline 315, and serine 316–leucine 352. The interval glutamine 392–serine 419 is disordered. PPR repeat units follow at residues aspartate 517–proline 551, asparagine 552–proline 583, and asparagine 584–valine 618. Residues histidine 670 to arginine 698 form a disordered region. Residues lysine 678–aspartate 690 are compositionally biased toward basic and acidic residues.

The protein belongs to the PTCD1 family. As to quaternary structure, associates with mitochondrial leucine tRNAs. Interacts with ELAC2.

Its subcellular location is the mitochondrion. The protein resides in the mitochondrion matrix. Functionally, mitochondrial protein implicated in negative regulation of leucine tRNA levels, as well as negative regulation of mitochondria-encoded proteins and COX activity. Also affects the 3'-processing of mitochondrial tRNAs. This is Pentatricopeptide repeat-containing protein 1, mitochondrial (PTCD1) from Pongo abelii (Sumatran orangutan).